We begin with the raw amino-acid sequence, 218 residues long: Superoxide dismutase [Mn] 1 (218 aa).

Mn(2+) is bound by residues His43, His98, Asp180, and His184.

This sequence belongs to the iron/manganese superoxide dismutase family. In terms of assembly, homodimer. The cofactor is Mn(2+).

The enzyme catalyses 2 superoxide + 2 H(+) = H2O2 + O2. Its function is as follows. Destroys superoxide anion radicals which are normally produced within the cells and which are toxic to biological systems. This Bacillus cereus (strain ATCC 14579 / DSM 31 / CCUG 7414 / JCM 2152 / NBRC 15305 / NCIMB 9373 / NCTC 2599 / NRRL B-3711) protein is Superoxide dismutase [Mn] 1 (sodA1).